Here is a 193-residue protein sequence, read N- to C-terminus: MAALRPGSKALRRLLCRSFSGGGVRLARERATERRDAASSRVSRFCPPRQSCHDWIGPPDKYSNLRPVHFHVPENESPLEQRLRELRQETQEWNQQFWAKQNLSFNKEKEEFIYSRLQAKGSGPRTESGQRATLDAEEMADFYKDFLSKNFQKHMCYNRDWYKRNFAITFFMGKVALERMWSKLKQKPKKTSG.

A mitochondrion-targeting transit peptide spans 1 to 26 (MAALRPGSKALRRLLCRSFSGGGVRL).

Belongs to the COA8 family. N-terminal mitochondrial targeting sequence is cleaved from the mature protein once in the mitochondrion. Post-translationally, in normal conditions, the cytoplasmic precursor protein is rapidly degraded by the ubiquitination-proteasome system (UPS). Oxidative stress induces protein stabilization and import into mitochondria where it protects COX from degradation.

The protein localises to the mitochondrion inner membrane. Its function is as follows. Required for cytochrome c complex (COX) IV assembly and function Protects COX assembly from oxidation-induced degradation, COX being the terminal component of the mitochondrial respiratory chain. In Rattus norvegicus (Rat), this protein is Cytochrome c oxidase assembly factor 8 (Coa8).